Reading from the N-terminus, the 192-residue chain is UPF0312 protein Spro_1887 (192 aa).

The N-terminal stretch at Met-1–Ala-23 is a signal peptide.

Belongs to the UPF0312 family. Type 1 subfamily.

The protein resides in the periplasm. The chain is UPF0312 protein Spro_1887 from Serratia proteamaculans (strain 568).